Reading from the N-terminus, the 306-residue chain is C-type lectin domain family 10 member A (306 aa).

Topologically, residues 1-37 are cytoplasmic; the sequence is MTMAYENFQNLGSEEKNQEAGKAPPQSFLCNILSWTH. Residues 38 to 58 traverse the membrane as a helical; Signal-anchor for type II membrane protein segment; sequence LLLFSLGLSLLLLVVISVIGS. Residues 59-306 lie on the Extracellular side of the membrane; that stretch reads QNSQLRRDLE…VCEMKLAKDS (248 aa). N-linked (GlcNAc...) asparagine glycosylation is found at N76 and N168. One can recognise a C-type lectin domain in the interval 174 to 300; the sequence is CCPLHWMEHE…QRPYRWVCEM (127 aa). Disulfide bonds link C175/C186, C203/C298, and C276/C290.

Homooligomer.

The protein resides in the membrane. Its function is as follows. Recognizes terminal galactose and N-acetylgalactosamine units. This Rattus norvegicus (Rat) protein is C-type lectin domain family 10 member A (Clec10a).